A 295-amino-acid polypeptide reads, in one-letter code: Small ribosomal subunit protein uS2 (295 aa).

Residues 263–295 (KKFSKTKNIDEETNTEFEQALNDADENKNSDNA) form a disordered region.

This sequence belongs to the universal ribosomal protein uS2 family.

This chain is Small ribosomal subunit protein uS2, found in Rickettsia massiliae (strain Mtu5).